The following is a 360-amino-acid chain: Photosystem II protein D1 (360 aa).

The next 3 membrane-spanning stretches (helical) occupy residues 29–46 (YIGW…TATS), 118–133 (HFLL…EWEL), and 142–156 (WISV…AAAA). H118 provides a ligand contact to chlorophyll a. Residue Y126 participates in pheophytin a binding. [CaMn4O5] cluster is bound by residues D170 and E189. Residues 197–218 (FHQLGVAGVFGGSLFSAMHGSL) form a helical membrane-spanning segment. H198 serves as a coordination point for chlorophyll a. A quinone contacts are provided by residues H215 and 264–265 (SF). A Fe cation-binding site is contributed by H215. Residue H272 participates in Fe cation binding. Residues 274–288 (FLGAWPVVGIWLTSM) form a helical membrane-spanning segment. Positions 332, 333, 342, and 344 each coordinate [CaMn4O5] cluster. A propeptide spanning residues 345–360 (SGDSCPVALVAPSING) is cleaved from the precursor.

It belongs to the reaction center PufL/M/PsbA/D family. In terms of assembly, PSII is composed of 1 copy each of membrane proteins PsbA, PsbB, PsbC, PsbD, PsbE, PsbF, PsbH, PsbI, PsbJ, PsbK, PsbL, PsbM, PsbT, PsbX, PsbY, PsbZ, Psb30/Ycf12, at least 3 peripheral proteins of the oxygen-evolving complex and a large number of cofactors. It forms dimeric complexes. The cofactor is The D1/D2 heterodimer binds P680, chlorophylls that are the primary electron donor of PSII, and subsequent electron acceptors. It shares a non-heme iron and each subunit binds pheophytin, quinone, additional chlorophylls, carotenoids and lipids. D1 provides most of the ligands for the Mn4-Ca-O5 cluster of the oxygen-evolving complex (OEC). There is also a Cl(-1) ion associated with D1 and D2, which is required for oxygen evolution. The PSII complex binds additional chlorophylls, carotenoids and specific lipids.. Tyr-161 forms a radical intermediate that is referred to as redox-active TyrZ, YZ or Y-Z. Post-translationally, C-terminally processed by CTPA; processing is essential to allow assembly of the oxygen-evolving complex and thus photosynthetic growth.

It localises to the plastid. It is found in the chloroplast thylakoid membrane. It catalyses the reaction 2 a plastoquinone + 4 hnu + 2 H2O = 2 a plastoquinol + O2. Its function is as follows. Photosystem II (PSII) is a light-driven water:plastoquinone oxidoreductase that uses light energy to abstract electrons from H(2)O, generating O(2) and a proton gradient subsequently used for ATP formation. It consists of a core antenna complex that captures photons, and an electron transfer chain that converts photonic excitation into a charge separation. The D1/D2 (PsbA/PsbD) reaction center heterodimer binds P680, the primary electron donor of PSII as well as several subsequent electron acceptors. This Palmaria palmata (Dulse) protein is Photosystem II protein D1.